A 158-amino-acid chain; its full sequence is UPF0145 protein Psyc_1853 (158 aa).

A compositionally biased stretch (polar residues) spans 113–122 (IYQSSNQPPS). Positions 113-158 (IYQSSNQPPSHHSGHSQYEEPVPSAAQPSTTAQANDDLPRFNPFGE) are disordered.

This sequence belongs to the UPF0145 family.

The polypeptide is UPF0145 protein Psyc_1853 (Psychrobacter arcticus (strain DSM 17307 / VKM B-2377 / 273-4)).